The following is a 169-amino-acid chain: Large ribosomal subunit protein uL5 (169 aa).

This sequence belongs to the universal ribosomal protein uL5 family. Part of the 50S ribosomal subunit; contacts the 5S rRNA and probably tRNA. Forms a bridge to the 30S subunit in the 70S ribosome.

Functionally, this is one of the proteins that bind and probably mediate the attachment of the 5S RNA into the large ribosomal subunit, where it forms part of the central protuberance. In the 70S ribosome it contacts protein S13 of the 30S subunit (bridge B1b), connecting the 2 subunits; this bridge is implicated in subunit movement. May contact the P site tRNA; the 5S rRNA and some of its associated proteins might help stabilize positioning of ribosome-bound tRNAs. In Methanosarcina mazei (strain ATCC BAA-159 / DSM 3647 / Goe1 / Go1 / JCM 11833 / OCM 88) (Methanosarcina frisia), this protein is Large ribosomal subunit protein uL5.